The chain runs to 37 residues: Kappa-actitoxin-Bgr1a (37 aa).

A ShKT domain is found at 2-37 (CRDWFKETACRHAKSLGNCRTSQKYRANCAKTCELC). 3 disulfides stabilise this stretch: Cys2/Cys37, Cys11/Cys30, and Cys20/Cys34. The tract at residues 25–26 (KY) is crucial for binding to potassium channels.

This sequence belongs to the sea anemone type 1 potassium channel toxin family. Type 1b subfamily.

Its subcellular location is the secreted. It is found in the nematocyst. Inhibits voltage-dependent potassium channels of the Kv1 family (Kv1.1/KCNA1 (Kd=6 nM), Kv1.2/KCNA2 (Kd=15 nM), Kv1.3/KCNA3 (Kd=10-39 nM), Kv1.6/KCNA6, and KCa3.1/KCNN4 (Kd=172 nM)). The protein is Kappa-actitoxin-Bgr1a of Bunodosoma granuliferum (Red warty sea anemone).